We begin with the raw amino-acid sequence, 635 residues long: Cationic amino acid transporter 4 (635 aa).

3 helical membrane passes run 42–62 (LTLLGVGGMVGSGLYVLTGTV), 66–86 (MAGPAVLLSFLVAAVASLLAA), and 113–133 (IWAFLIGWNVLLEYLIGGAAV). 3 N-linked (GlcNAc...) asparagine glycosylation sites follow: asparagine 146, asparagine 151, and asparagine 195. A helical membrane pass occupies residues 197–217 (TFSAISLIVILFIIVLGFILA). A glycan (N-linked (GlcNAc...) asparagine) is linked at asparagine 221. Helical transmembrane passes span 229 to 249 (FAPFGFSGILAGTATCFYAFV), 270 to 290 (MAIAISLSLAAGAYILVSTVL), 318 to 338 (GFIVAVGSICAMNTVLLSNLF), 365 to 385 (QVPVVGILVFGVLMALLALLL), and 391 to 411 (VQFLSIGTLLAYTFVATSIIV). Phosphoserine occurs at positions 422 and 427. 4 consecutive transmembrane segments (helical) span residues 478 to 498 (VAWALGILVASAISLACVLVF), 508 to 528 (WGYVLLLVISGAVFLSSLLVL), 539 to 559 (TFQIPLVPLTPALSILLNTCL), and 567 to 587 (TWLRFIFWLLVGLVVYFGYGI).

It belongs to the amino acid-polyamine-organocation (APC) superfamily. Cationic amino acid transporter (CAT) (TC 2.A.3.3) family.

It is found in the membrane. In terms of biological role, involved in the transport of the cationic amino acids (arginine, lysine and ornithine). The polypeptide is Cationic amino acid transporter 4 (Slc7a4) (Mus musculus (Mouse)).